A 130-amino-acid polypeptide reads, in one-letter code: Histone H2A type 1-K (130 aa).

The tract at residues Met-1–Ala-22 is disordered. An N-acetylserine modification is found at Ser-2. Ser-2 bears the Phosphoserine; by RPS6KA5 mark. Arg-4 is modified (citrulline; alternate). Arg-4 carries the post-translational modification Symmetric dimethylarginine; by PRMT5; alternate. Lys-6 and Lys-10 each carry N6-(2-hydroxyisobutyryl)lysine; alternate. The residue at position 6 (Lys-6) is an N6-(beta-hydroxybutyryl)lysine; alternate. 2 positions are modified to N6-acetyllysine; alternate: Lys-6 and Lys-10. The segment covering Gln-7–Ser-19 has biased composition (basic residues). An N6-lactoyllysine; alternate modification is found at Lys-10. Position 10 is an N6-succinyllysine; alternate (Lys-10). Residues Lys-14 and Lys-16 each participate in a glycyl lysine isopeptide (Lys-Gly) (interchain with G-Cter in ubiquitin) cross-link. The residue at position 37 (Lys-37) is an N6-(2-hydroxyisobutyryl)lysine; alternate. Lys-37 bears the N6-(beta-hydroxybutyryl)lysine; alternate mark. Lys-37 carries the post-translational modification N6-crotonyllysine; alternate. An N6-(2-hydroxyisobutyryl)lysine mark is found at Lys-75 and Lys-76. Lys-96 is modified (N6-(2-hydroxyisobutyryl)lysine; alternate). Position 96 is an N6-succinyllysine; alternate (Lys-96). Lys-96 is modified (N6-glutaryllysine; alternate). Residue Gln-105 is modified to N5-methylglutamine. Residue Lys-119 is modified to N6-(2-hydroxyisobutyryl)lysine; alternate. Lys-119 and Lys-120 each carry N6-crotonyllysine; alternate. An N6-glutaryllysine; alternate mark is found at Lys-119 and Lys-120. The residue at position 120 (Lys-120) is an N6-(beta-hydroxybutyryl)lysine; alternate. A Glycyl lysine isopeptide (Lys-Gly) (interchain with G-Cter in ubiquitin); alternate cross-link involves residue Lys-120. Thr-121 is modified (phosphothreonine; by DCAF1). Residue Lys-126 is modified to N6-(beta-hydroxybutyryl)lysine; alternate. Lys-126 is modified (N6-crotonyllysine; alternate). N6-glutaryllysine; alternate is present on Lys-126.

This sequence belongs to the histone H2A family. In terms of assembly, the nucleosome is a histone octamer containing two molecules each of H2A, H2B, H3 and H4 assembled in one H3-H4 heterotetramer and two H2A-H2B heterodimers. The octamer wraps approximately 147 bp of DNA. Deiminated on Arg-4 in granulocytes upon calcium entry. In terms of processing, monoubiquitination of Lys-120 (H2AK119Ub) by RING1, TRIM37 and RNF2/RING2 complex gives a specific tag for epigenetic transcriptional repression and participates in X chromosome inactivation of female mammals. It is involved in the initiation of both imprinted and random X inactivation. Ubiquitinated H2A is enriched in inactive X chromosome chromatin. Ubiquitination of H2A functions downstream of methylation of 'Lys-27' of histone H3 (H3K27me). H2AK119Ub by RNF2/RING2 can also be induced by ultraviolet and may be involved in DNA repair. Following DNA double-strand breaks (DSBs), it is ubiquitinated through 'Lys-63' linkage of ubiquitin moieties by the E2 ligase UBE2N and the E3 ligases RNF8 and RNF168, leading to the recruitment of repair proteins to sites of DNA damage. Ubiquitination at Lys-14 and Lys-16 (H2AK13Ub and H2AK15Ub, respectively) in response to DNA damage is initiated by RNF168 that mediates monoubiquitination at these 2 sites, and 'Lys-63'-linked ubiquitin are then conjugated to monoubiquitin; RNF8 is able to extend 'Lys-63'-linked ubiquitin chains in vitro. Deubiquitinated by USP51 at Lys-14 and Lys-16 (H2AK13Ub and H2AK15Ub, respectively) after damaged DNA is repaired. H2AK119Ub and ionizing radiation-induced 'Lys-63'-linked ubiquitination (H2AK13Ub and H2AK15Ub) are distinct events. Post-translationally, phosphorylation on Ser-2 (H2AS1ph) is enhanced during mitosis. Phosphorylation on Ser-2 by RPS6KA5/MSK1 directly represses transcription. Acetylation of H3 inhibits Ser-2 phosphorylation by RPS6KA5/MSK1. Phosphorylation at Thr-121 (H2AT120ph) by DCAF1 is present in the regulatory region of many tumor suppresor genes and down-regulates their transcription. Symmetric dimethylation on Arg-4 by the PRDM1/PRMT5 complex may play a crucial role in the germ-cell lineage. In terms of processing, glutamine methylation at Gln-105 (H2AQ104me) by FBL is specifically dedicated to polymerase I. It is present at 35S ribosomal DNA locus and impairs binding of the FACT complex. Post-translationally, crotonylation (Kcr) is specifically present in male germ cells and marks testis-specific genes in post-meiotic cells, including X-linked genes that escape sex chromosome inactivation in haploid cells. Crotonylation marks active promoters and enhancers and confers resistance to transcriptional repressors. It is also associated with post-meiotically activated genes on autosomes. Hydroxybutyrylation of histones is induced by starvation. In terms of processing, lactylated in macrophages by EP300/P300 by using lactoyl-CoA directly derived from endogenous or exogenous lactate, leading to stimulates gene transcription.

The protein localises to the nucleus. Its subcellular location is the chromosome. Functionally, core component of nucleosome. Nucleosomes wrap and compact DNA into chromatin, limiting DNA accessibility to the cellular machineries which require DNA as a template. Histones thereby play a central role in transcription regulation, DNA repair, DNA replication and chromosomal stability. DNA accessibility is regulated via a complex set of post-translational modifications of histones, also called histone code, and nucleosome remodeling. The chain is Histone H2A type 1-K from Mus musculus (Mouse).